The sequence spans 48 residues: Gas vesicle protein A (48 aa).

It belongs to the gas vesicle GvpA family. As to quaternary structure, the gas vesicle shell is 2 nm thick and consists of a single layer of this protein. It forms helical ribs nearly perpendicular to the long axis of the vesicle.

Its subcellular location is the gas vesicle shell. Its function is as follows. Gas vesicles are hollow, gas filled proteinaceous nanostructures found in some microorganisms. During planktonic growth they allow positioning of the organism at a favorable depth for light or nutrient acquisition. GvpA forms the protein shell. The protein is Gas vesicle protein A of Spirulina sp. (strain CCAP 1475/10).